A 216-amino-acid polypeptide reads, in one-letter code: Putative ripening-related protein 4 (216 aa).

The first 25 residues, 1-25 (MAANVKVLVVLALLQLMSLHAVVHG), serve as a signal peptide directing secretion.

It belongs to the kiwellin family.

The protein localises to the secreted. This chain is Putative ripening-related protein 4, found in Oryza sativa subsp. japonica (Rice).